Here is a 138-residue protein sequence, read N- to C-terminus: Small ribosomal subunit protein uS11c (138 aa).

The tract at residues 1-22 (MAKSIPRISSRRNGRIGSGNNV) is disordered.

The protein belongs to the universal ribosomal protein uS11 family. As to quaternary structure, part of the 30S ribosomal subunit.

The protein resides in the plastid. This Cuscuta reflexa (Southern Asian dodder) protein is Small ribosomal subunit protein uS11c.